Reading from the N-terminus, the 300-residue chain is Ornithine carbamoyltransferase (300 aa).

Carbamoyl phosphate contacts are provided by residues 51–54 (STRT), Q78, R102, and 129–132 (HPCQ). L-ornithine-binding positions include N160, D217, and 221-222 (SM). Carbamoyl phosphate is bound by residues 257–258 (CL) and R285.

Belongs to the aspartate/ornithine carbamoyltransferase superfamily. OTCase family.

It is found in the cytoplasm. It carries out the reaction carbamoyl phosphate + L-ornithine = L-citrulline + phosphate + H(+). Its pathway is amino-acid biosynthesis; L-arginine biosynthesis; L-arginine from L-ornithine and carbamoyl phosphate: step 1/3. Its function is as follows. Reversibly catalyzes the transfer of the carbamoyl group from carbamoyl phosphate (CP) to the N(epsilon) atom of ornithine (ORN) to produce L-citrulline. The chain is Ornithine carbamoyltransferase from Halorhodospira halophila (strain DSM 244 / SL1) (Ectothiorhodospira halophila (strain DSM 244 / SL1)).